A 64-amino-acid chain; its full sequence is Bacteriocin glycocin F (64 aa).

The first 21 residues, 1–21, serve as a signal peptide directing secretion; the sequence is MSKLVKTLTISEISKAQNNGG. Cystine bridges form between C26-C49 and C33-C42. S39 is a glycosylation site (O-linked (GlcNAc) serine). C64 carries S-linked (GlcNAc) cysteine glycosylation.

The protein localises to the secreted. Its function is as follows. Has antibacterial activity against L.plantarum ATCC 8014. In purified form, the activity is bacteriostatic (IC(50)=2 nM) rather than bactericidal. The chain is Bacteriocin glycocin F from Lactiplantibacillus plantarum (Lactobacillus plantarum).